A 130-amino-acid polypeptide reads, in one-letter code: Small ribosomal subunit protein uS9 (130 aa).

The protein belongs to the universal ribosomal protein uS9 family.

In Geobacillus stearothermophilus (Bacillus stearothermophilus), this protein is Small ribosomal subunit protein uS9 (rpsI).